Here is a 350-residue protein sequence, read N- to C-terminus: Holliday junction branch migration complex subunit RuvB (350 aa).

The segment at 1–186 is large ATPase domain (RuvB-L); that stretch reads MAGHEEEDER…FGIPLRLDFY (186 aa). Residues Leu25, Arg26, Gly67, Lys70, Thr71, Thr72, 133-135, Arg176, Tyr186, and Arg223 contribute to the ATP site; that span reads EDF. Thr71 contributes to the Mg(2+) binding site. A small ATPAse domain (RuvB-S) region spans residues 187–257; sequence ETDELVQIVT…IADAALNRLE (71 aa). The interval 260-350 is head domain (RuvB-H); that stretch reads GRGLDAMDRR…VQPDLWSDAP (91 aa). The DNA site is built by Arg296, Arg315, and Arg320.

It belongs to the RuvB family. Homohexamer. Forms an RuvA(8)-RuvB(12)-Holliday junction (HJ) complex. HJ DNA is sandwiched between 2 RuvA tetramers; dsDNA enters through RuvA and exits via RuvB. An RuvB hexamer assembles on each DNA strand where it exits the tetramer. Each RuvB hexamer is contacted by two RuvA subunits (via domain III) on 2 adjacent RuvB subunits; this complex drives branch migration. In the full resolvosome a probable DNA-RuvA(4)-RuvB(12)-RuvC(2) complex forms which resolves the HJ.

The protein localises to the cytoplasm. The catalysed reaction is ATP + H2O = ADP + phosphate + H(+). Functionally, the RuvA-RuvB-RuvC complex processes Holliday junction (HJ) DNA during genetic recombination and DNA repair, while the RuvA-RuvB complex plays an important role in the rescue of blocked DNA replication forks via replication fork reversal (RFR). RuvA specifically binds to HJ cruciform DNA, conferring on it an open structure. The RuvB hexamer acts as an ATP-dependent pump, pulling dsDNA into and through the RuvAB complex. RuvB forms 2 homohexamers on either side of HJ DNA bound by 1 or 2 RuvA tetramers; 4 subunits per hexamer contact DNA at a time. Coordinated motions by a converter formed by DNA-disengaged RuvB subunits stimulates ATP hydrolysis and nucleotide exchange. Immobilization of the converter enables RuvB to convert the ATP-contained energy into a lever motion, pulling 2 nucleotides of DNA out of the RuvA tetramer per ATP hydrolyzed, thus driving DNA branch migration. The RuvB motors rotate together with the DNA substrate, which together with the progressing nucleotide cycle form the mechanistic basis for DNA recombination by continuous HJ branch migration. Branch migration allows RuvC to scan DNA until it finds its consensus sequence, where it cleaves and resolves cruciform DNA. The protein is Holliday junction branch migration complex subunit RuvB of Rhodospirillum rubrum (strain ATCC 11170 / ATH 1.1.1 / DSM 467 / LMG 4362 / NCIMB 8255 / S1).